We begin with the raw amino-acid sequence, 155 residues long: Small ribosomal subunit protein uS7c (155 aa).

The protein belongs to the universal ribosomal protein uS7 family. As to quaternary structure, part of the 30S ribosomal subunit.

The protein localises to the plastid. The protein resides in the chloroplast. In terms of biological role, one of the primary rRNA binding proteins, it binds directly to 16S rRNA where it nucleates assembly of the head domain of the 30S subunit. The chain is Small ribosomal subunit protein uS7c (rps7) from Chaetosphaeridium globosum (Charophycean green alga).